A 464-amino-acid chain; its full sequence is Cysteine--tRNA ligase (464 aa).

A Zn(2+)-binding site is contributed by cysteine 32. Residues 34–44 (VTVYDDCHIGH) carry the 'HIGH' region motif. Cysteine 213, histidine 238, and glutamate 242 together coordinate Zn(2+). Residues 270–274 (KMSKS) carry the 'KMSKS' region motif. Lysine 273 provides a ligand contact to ATP.

The protein belongs to the class-I aminoacyl-tRNA synthetase family. As to quaternary structure, monomer. It depends on Zn(2+) as a cofactor.

It localises to the cytoplasm. The enzyme catalyses tRNA(Cys) + L-cysteine + ATP = L-cysteinyl-tRNA(Cys) + AMP + diphosphate. The chain is Cysteine--tRNA ligase from Francisella tularensis subsp. holarctica (strain LVS).